A 333-amino-acid polypeptide reads, in one-letter code: L-lactate dehydrogenase A chain (333 aa).

Residues 30 to 58 (GAVG…IEDK) and Arg100 each bind NAD(+). The substrate site is built by Arg107, Asn139, and Arg170. Position 139 (Asn139) interacts with NAD(+). Residue His194 is the Proton acceptor of the active site. Substrate is bound at residue Thr249.

The protein belongs to the LDH/MDH superfamily. LDH family. As to quaternary structure, homotetramer.

It localises to the cytoplasm. It catalyses the reaction (S)-lactate + NAD(+) = pyruvate + NADH + H(+). It participates in fermentation; pyruvate fermentation to lactate; (S)-lactate from pyruvate: step 1/1. Functionally, interconverts simultaneously and stereospecifically pyruvate and lactate with concomitant interconversion of NADH and NAD(+). The polypeptide is L-lactate dehydrogenase A chain (LDHA) (Ambystoma mexicanum (Axolotl)).